The primary structure comprises 649 residues: MSSIKITFPDNSVKEFDAGVTTAEIAKSISISLAKKAVAGKVDGNFVDLNQPLKEDGSIEIITKDSNDGLVVLWRTAAQVLANALHELYPNMKFGMGDVTEHGFYFDTDNSESQVAETDFEKISQKMSEIIKANLPIERVEFSEEEALNLVSGDEYQEELVRDVANKNNGRVVAYKQGDFIDITDGVVLSSTGEVKIFKLLSVAGAYWKGASSNPMLQRIYGTAFYKQKDLDAELQRQKEARERDHRVIGNELDLFFVDPKVGAGLPYWMPNGATIRRVIERYIIDKEVAWGFQHVYTPVLANLNLYKQSGHWDHYREDMFPPMDMGDGEMLELRPMNCPSHIQVYNHHKRSYRELPLRIAELGMMHRYEKSGALTGLSRVREMTLNDGHDFIEPDHIEDEIKTLIKLMTEVYNDFDITDYRFRLSYRDPKNTEKYFDDDEMWEKSQSKLKAAMDDMGLEYFEAEGEAAFYGPKIDVQTKTALGGEETLSTIQLDFLLPERFDLKYIGADGEEHRPVMVHRGIVSTMERFTAYLTEMYKGAFPTWLAPHQVDIIPVKNDLHMDYVNDLSSKLRAHGIRVTVDDRNEKMGYKIRQAQVNKIPYTLVIGDEEVSNGTVTVRKYGEEKTNTMTKAEFKNLLFEDIENYSREK.

The TGS domain maps to 1-63 (MSSIKITFPD…KEDGSIEIIT (63 aa)). The catalytic stretch occupies residues 245 to 543 (DHRVIGNELD…LTEMYKGAFP (299 aa)). The Zn(2+) site is built by Cys339, His390, and His520.

Belongs to the class-II aminoacyl-tRNA synthetase family. As to quaternary structure, homodimer. Zn(2+) is required as a cofactor.

It is found in the cytoplasm. The enzyme catalyses tRNA(Thr) + L-threonine + ATP = L-threonyl-tRNA(Thr) + AMP + diphosphate + H(+). Catalyzes the attachment of threonine to tRNA(Thr) in a two-step reaction: L-threonine is first activated by ATP to form Thr-AMP and then transferred to the acceptor end of tRNA(Thr). Also edits incorrectly charged L-seryl-tRNA(Thr). This chain is Threonine--tRNA ligase, found in Ligilactobacillus salivarius (strain UCC118) (Lactobacillus salivarius).